The following is a 623-amino-acid chain: Xaa-Pro aminopeptidase 1 (623 aa).

R77 lines the a peptide pocket. K304 bears the N6-acetyllysine mark. Residue H395 coordinates a peptide. The Mn(2+) site is built by D415, D426, and H489. H489, H498, and E523 together coordinate a peptide. 2 residues coordinate Mn(2+): E523 and E537.

The protein belongs to the peptidase M24B family. As to quaternary structure, homodimer. Mn(2+) serves as cofactor.

It is found in the cytoplasm. Its subcellular location is the cytosol. It carries out the reaction Release of any N-terminal amino acid, including proline, that is linked to proline, even from a dipeptide or tripeptide.. Functionally, metalloaminopeptidase that catalyzes the removal of a penultimate prolyl residue from the N-termini of peptides, such as Arg-Pro-Pro. Contributes to the degradation of bradykinin. This Mus musculus (Mouse) protein is Xaa-Pro aminopeptidase 1.